We begin with the raw amino-acid sequence, 861 residues long: Bifunctional uridylyltransferase/uridylyl-removing enzyme (861 aa).

The tract at residues 1–321 (MKNDNRIIKN…VYHQKQKIIR (321 aa)) is uridylyltransferase. The interval 322–678 (LDDEFQLSNR…IMPHHSQGGT (357 aa)) is uridylyl-removing. Residues 440–562 (VDQHTLFVIR…LPHARYLDYL (123 aa)) form the HD domain. ACT domains are found at residues 679 to 760 (EVFI…AVSR) and 788 to 861 (QLFL…KSKY).

It belongs to the GlnD family. Mg(2+) serves as cofactor.

The catalysed reaction is [protein-PII]-L-tyrosine + UTP = [protein-PII]-uridylyl-L-tyrosine + diphosphate. It catalyses the reaction [protein-PII]-uridylyl-L-tyrosine + H2O = [protein-PII]-L-tyrosine + UMP + H(+). Uridylyltransferase (UTase) activity is inhibited by glutamine, while glutamine activates uridylyl-removing (UR) activity. In terms of biological role, modifies, by uridylylation and deuridylylation, the PII regulatory proteins (GlnB and homologs), in response to the nitrogen status of the cell that GlnD senses through the glutamine level. Under low glutamine levels, catalyzes the conversion of the PII proteins and UTP to PII-UMP and PPi, while under higher glutamine levels, GlnD hydrolyzes PII-UMP to PII and UMP (deuridylylation). Thus, controls uridylylation state and activity of the PII proteins, and plays an important role in the regulation of nitrogen assimilation and metabolism. In Legionella pneumophila (strain Corby), this protein is Bifunctional uridylyltransferase/uridylyl-removing enzyme.